A 296-amino-acid chain; its full sequence is Haloalkane dehalogenase (296 aa).

One can recognise an AB hydrolase-1 domain in the interval 31–155; that stretch reads PILFQHGNPT…QDRDLFQAFR (125 aa). Catalysis depends on D108, which acts as the Nucleophile. The active-site Proton donor is E132. H272 acts as the Proton acceptor in catalysis.

Belongs to the haloalkane dehalogenase family. Type 2 subfamily. As to quaternary structure, monomer.

The protein resides in the periplasm. The catalysed reaction is 1-haloalkane + H2O = a halide anion + a primary alcohol + H(+). It catalyses the reaction (3R,6R)-1,3,4,6-tetrachlorocyclohexa-1,4-diene + 2 H2O = 2,5-dichlorocyclohexa-2,5-dien-1,4-diol + 2 chloride + 2 H(+). It functions in the pathway xenobiotic degradation; gamma-hexachlorocyclohexane degradation. Catalyzes hydrolytic cleavage of carbon-halogen bonds in halogenated aliphatic compounds, leading to the formation of the corresponding primary alcohols, halide ions and protons. Is involved in the degradation of the important environmental pollutant gamma-hexachlorocyclohexane (gamma-HCH or lindane) as it also catalyzes conversion of 1,3,4,6-tetrachloro-1,4-cyclohexadiene (1,4-TCDN) to 2,5-dichloro-2,5-cyclohexadiene-1,4-diol (2,5-DDOL) via the intermediate 2,4,5-trichloro-2,5-cyclohexadiene-1-ol (2,4,5-DNOL). In Sphingobium indicum (strain DSM 16412 / CCM 7286 / MTCC 6364 / B90A), this protein is Haloalkane dehalogenase.